The chain runs to 827 residues: uncharacterized protein (827 aa).

In terms of domain architecture, PAS 1 spans 12–82; it reads FDADFEAILN…DMDIGVLSTG (71 aa). In terms of domain architecture, PAC 1 spans 212–264; sequence LDVEFRLAAAEGGYSWYRSRAATRRAEDGSILRWYGTVEDIDDRRKMFEALKE. The 71-residue stretch at 265-335 folds into the PAS 2 domain; sequence SEARFRAIAD…RVFYQAFDLR (71 aa). In terms of domain architecture, PAC 2 spans 338-390; sequence VRMEYRLKRAGGGSAWVIDIGQPRFASDGTFLGFVGIALDITERRNAEQERLL. One can recognise a GGDEF domain in the interval 428-561; that stretch reads TRLAILCLDL…GGGTIVQYEP (134 aa). Positions 570–820 constitute an EAL domain; that stretch reads RQRMKVSLRH…QAMALLKSRS (251 aa).

This is an uncharacterized protein from Sinorhizobium fredii (strain NBRC 101917 / NGR234).